The sequence spans 757 residues: Neutral ceramidase 2 (757 aa).

The signal sequence occupies residues 1–25 (MAVSLPLFQFILFLLLLLLSRTVYA). N311 carries an N-linked (GlcNAc...) asparagine glycan. Catalysis depends on S330, which acts as the Nucleophile. Residues N348 and N657 are each glycosylated (N-linked (GlcNAc...) asparagine).

It belongs to the neutral ceramidase family.

It localises to the secreted. The protein localises to the endoplasmic reticulum. It is found in the golgi apparatus. It catalyses the reaction an N-acylsphing-4-enine + H2O = sphing-4-enine + a fatty acid. Hydrolyzes the sphingolipid ceramide into sphingosine and free fatty acid. The protein is Neutral ceramidase 2 of Arabidopsis thaliana (Mouse-ear cress).